A 194-amino-acid chain; its full sequence is Orotate phosphoribosyltransferase (194 aa).

5-phospho-alpha-D-ribose 1-diphosphate is bound by residues R102, K103, K106, H108, and 129 to 137; that span reads EDVVTTGGS. T133 and R161 together coordinate orotate.

Belongs to the purine/pyrimidine phosphoribosyltransferase family. PyrE subfamily. As to quaternary structure, homodimer. Mg(2+) is required as a cofactor.

It carries out the reaction orotidine 5'-phosphate + diphosphate = orotate + 5-phospho-alpha-D-ribose 1-diphosphate. It participates in pyrimidine metabolism; UMP biosynthesis via de novo pathway; UMP from orotate: step 1/2. Catalyzes the transfer of a ribosyl phosphate group from 5-phosphoribose 1-diphosphate to orotate, leading to the formation of orotidine monophosphate (OMP). This is Orotate phosphoribosyltransferase from Synechococcus sp. (strain CC9902).